A 142-amino-acid chain; its full sequence is Large ribosomal subunit protein uL11 (142 aa).

This sequence belongs to the universal ribosomal protein uL11 family. Part of the ribosomal stalk of the 50S ribosomal subunit. Interacts with L10 and the large rRNA to form the base of the stalk. L10 forms an elongated spine to which L12 dimers bind in a sequential fashion forming a multimeric L10(L12)X complex. One or more lysine residues are methylated.

Functionally, forms part of the ribosomal stalk which helps the ribosome interact with GTP-bound translation factors. This Beijerinckia indica subsp. indica (strain ATCC 9039 / DSM 1715 / NCIMB 8712) protein is Large ribosomal subunit protein uL11.